Reading from the N-terminus, the 269-residue chain is Glutamate racemase (269 aa).

Residues 11–12 (DS) and 43–44 (YG) each bind substrate. Cys-74 functions as the Proton donor/acceptor in the catalytic mechanism. 75–76 (NT) provides a ligand contact to substrate. The active-site Proton donor/acceptor is Cys-185. 186–187 (TH) serves as a coordination point for substrate.

The protein belongs to the aspartate/glutamate racemases family.

The enzyme catalyses L-glutamate = D-glutamate. The protein operates within cell wall biogenesis; peptidoglycan biosynthesis. Functionally, provides the (R)-glutamate required for cell wall biosynthesis. The chain is Glutamate racemase from Bacillus cereus (strain G9842).